A 777-amino-acid chain; its full sequence is Glucocorticoid receptor (777 aa).

Positions Met1–Asn14 are enriched in basic and acidic residues. The disordered stretch occupies residues Met1–Arg23. A modulating region spans residues Met1–Leu420. Thr8 bears the Phosphothreonine mark. Arg23 carries the post-translational modification Omega-N-methylarginine. 4 positions are modified to phosphoserine: Ser45, Ser113, Ser134, and Ser141. Residues Asn130–Lys140 show a composition bias toward polar residues. Residues Asn130–Leu183 form a disordered region. Residues Ser141–Ala150 show a composition bias toward low complexity. Positions Thr152–Ile163 are enriched in basic and acidic residues. A compositionally biased stretch (polar residues) spans Ser164–Thr174. 3 positions are modified to phosphoserine: Ser203, Ser211, and Ser226. Lys258 is covalently cross-linked (Glycyl lysine isopeptide (Lys-Gly) (interchain with G-Cter in SUMO2)). The residue at position 267 (Ser267) is a Phosphoserine. Residues Lys277 and Lys293 each participate in a glycyl lysine isopeptide (Lys-Gly) (interchain with G-Cter in SUMO); alternate cross-link. Glycyl lysine isopeptide (Lys-Gly) (interchain with G-Cter in SUMO2); alternate cross-links involve residues Lys277 and Lys293. Residues Ser394–Thr414 are compositionally biased toward low complexity. Residues Ser394–Gly415 form a disordered region. At Ser404 the chain carries Phosphoserine. Lys419 is covalently cross-linked (Glycyl lysine isopeptide (Lys-Gly) (interchain with G-Cter in ubiquitin)). 2 NR C4-type zinc fingers span residues Cys421 to Cys441 and Cys457 to Cys476. Positions Cys421 to Met486 form a DNA-binding region, nuclear receptor. An N6-acetyllysine mark is found at Lys480, Lys492, Lys494, and Lys495. The interaction with CLOCK stretch occupies residues Gly485–Lys777. Residues Asn487–Ala523 are hinge. Positions Thr524–Thr758 constitute an NR LBD domain. Residues Leu532 to Leu697 are interaction with CRY1. Lys703 is covalently cross-linked (Glycyl lysine isopeptide (Lys-Gly) (interchain with G-Cter in SUMO)).

This sequence belongs to the nuclear hormone receptor family. NR3 subfamily. As to quaternary structure, heteromultimeric cytoplasmic complex with HSP90AA1, HSPA1A/HSPA1B, and FKBP5 or another immunophilin such as PPID, STIP1, or the immunophilin homolog PPP5C. Upon ligand binding FKBP5 dissociates from the complex and FKBP4 takes its place, thereby linking the complex to dynein and mediating transport to the nucleus, where the complex dissociates. Probably forms a complex composed of chaperones HSP90 and HSP70, co-chaperones CDC37, PPP5C, TSC1 and client protein TSC2, CDK4, AKT, RAF1 and NR3C1; this complex does not contain co-chaperones STIP1/HOP and PTGES3/p23. Directly interacts with UNC45A. Binds to DNA as a homodimer, and as heterodimer with NR3C2 or the retinoid X receptor. Binds STAT5A and STAT5B homodimers and heterodimers. Interacts with NRIP1, POU2F1, POU2F2 and TRIM28. Interacts with several coactivator complexes, including the SMARCA4 complex, CREBBP/EP300, TADA2L (Ada complex) and p160 coactivators such as NCOA2 and NCOA6. Interaction with BAG1 inhibits transactivation. Interacts with HEXIM1 and TGFB1I1. Interacts with NCOA1. Interacts with NCOA3, SMARCA4, SMARCC1, SMARCD1, and SMARCE1. Interacts with CLOCK, CRY1 and CRY2 in a ligand-dependent fashion. Interacts with CIART. Interacts with RWDD3. Interacts with UBE2I/UBC9 and this interaction is enhanced in the presence of RWDD3. Interacts with GRIP1. Interacts with NR4A3 (via nuclear receptor DNA-binding domain), represses transcription activity of NR4A3 on the POMC promoter Nur response element (NurRE). Directly interacts with PNRC2 to attract and form a complex with UPF1 and DCP1A; the interaction leads to rapid mRNA degradation. Interacts with GSK3B. Interacts with FNIP1 and FNIP2. Interacts (via C-terminus) with HNRNPU (via C-terminus). Interacts with MCM3AP. Interacts (via domain NR LBD) with HSP90AA1 and HSP90AB1. In the absence of hormonal ligand, interacts with TACC1. Interacts (via NR LBD domain) with ZNF764 (via KRAB domain); the interaction regulates transcription factor activity of NR3C1 by directing its actions toward certain biologic pathways. Acetylation by CLOCK reduces its binding to glucocorticoid response elements and its transcriptional activity. Post-translationally, increased proteasome-mediated degradation in response to glucocorticoids. In terms of processing, phosphorylated in the absence of hormone; becomes hyperphosphorylated in the presence of glucocorticoid. The Ser-203, Ser-226 and Ser-404-phosphorylated forms are mainly cytoplasmic, and the Ser-211-phosphorylated form is nuclear. Phosphorylation at Ser-211 increases transcriptional activity. Phosphorylation at Ser-203, Ser-226 and Ser-404 decreases signaling capacity. Phosphorylation at Ser-404 may protect from glucocorticoid-induced apoptosis. Phosphorylation at Ser-203 and Ser-211 is not required in regulation of chromosome segregation. May be dephosphorylated by PPP5C, attenuates NR3C1 action. Ubiquitinated by UBR5, leading to its degradation: UBR5 specifically recognizes and binds ligand-bound NR3C1 when it is not associated with coactivators (NCOAs). In presence of NCOAs, the UBR5-degron is not accessible, preventing its ubiquitination and degradation. Post-translationally, sumoylation at Lys-277 and Lys-293 negatively regulates its transcriptional activity. Sumoylation at Lys-703 positively regulates its transcriptional activity in the presence of RWDD3. Sumoylation at Lys-277 and Lys-293 is dispensable whereas sumoylation at Lys-703 is critical for the stimulatory effect of RWDD3 on its transcriptional activity. Heat shock increases sumoylation in a RWDD3-dependent manner.

It is found in the cytoplasm. Its subcellular location is the nucleus. It localises to the mitochondrion. The protein resides in the cytoskeleton. The protein localises to the spindle. It is found in the microtubule organizing center. Its subcellular location is the centrosome. It localises to the chromosome. The protein resides in the nucleoplasm. Its function is as follows. Receptor for glucocorticoids (GC). Has a dual mode of action: as a transcription factor that binds to glucocorticoid response elements (GRE), both for nuclear and mitochondrial DNA, and as a modulator of other transcription factors. Affects inflammatory responses, cellular proliferation and differentiation in target tissues. Involved in chromatin remodeling. Plays a role in rapid mRNA degradation by binding to the 5' UTR of target mRNAs and interacting with PNRC2 in a ligand-dependent manner which recruits the RNA helicase UPF1 and the mRNA-decapping enzyme DCP1A, leading to RNA decay. Could act as a coactivator for STAT5-dependent transcription upon growth hormone (GH) stimulation and could reveal an essential role of hepatic GR in the control of body growth. Mediates glucocorticoid-induced apoptosis. Promotes accurate chromosome segregation during mitosis. May act as a tumor suppressor. May play a negative role in adipogenesis through the regulation of lipolytic and antilipogenic gene expression. The protein is Glucocorticoid receptor (NR3C1) of Pongo abelii (Sumatran orangutan).